The sequence spans 212 residues: Cytidylate kinase (212 aa).

7–15 lines the ATP pocket; it reads GPAASGKGT.

Belongs to the cytidylate kinase family. Type 1 subfamily.

The protein localises to the cytoplasm. The catalysed reaction is CMP + ATP = CDP + ADP. It catalyses the reaction dCMP + ATP = dCDP + ADP. The chain is Cytidylate kinase from Rhodopseudomonas palustris (strain BisB5).